The chain runs to 275 residues: Transcriptional coregulator psa-3 (275 aa).

An MEIS N-terminal domain is found at 91–161; sequence TDDIKRLFQS…RRTVCHEALV (71 aa). Positions 239-275 are disordered; it reads QLPPNFLKPSNEKSPEKSEEEKSQKPSSSPKSPSLSD. Residues 248–262 are compositionally biased toward basic and acidic residues; the sequence is SNEKSPEKSEEEKSQ. A compositionally biased stretch (low complexity) spans 263–275; sequence KPSSSPKSPSLSD.

Interacts with homeobox protein ceh-20; the interaction is direct, facilitates nuclear localization of ceh-20 and may stabilize interaction of a ceh-20-nob-1 complex with DNA.

The protein resides in the nucleus. Probable transcription coregulator. Required for asymmetric cell divisions of the T hypodermal cells, and cell fate determination, in concert with homeobox proteins nob-1 and ceh-20. Acts downstream of the Wnt signaling pathway, and of ceh-20 and nob-1. This is Transcriptional coregulator psa-3 from Caenorhabditis elegans.